Consider the following 213-residue polypeptide: Protein FAM156A/FAM156B (213 aa).

Met-1 carries the N-acetylmethionine modification. A disordered region spans residues 1–62 (MDPLQKRNPA…SQAVPLPEGL (62 aa)). Residues 8 to 37 (NPASPSKSSPMTAAETSQEGPAPSQPSYSE) are compositionally biased toward polar residues. Position 114 is a phosphoserine (Ser-114). The chain crosses the membrane as a helical span at residues 154–170 (WETLVQGLSGLTLSLGT). Positions 165-198 (TLSLGTNQPGPLPEAALQPQETEEKRQRERQQES) are disordered. A compositionally biased stretch (basic and acidic residues) spans 186 to 197 (TEEKRQRERQQE).

The protein resides in the membrane. The protein is Protein FAM156A/FAM156B (FAM156A) of Homo sapiens (Human).